We begin with the raw amino-acid sequence, 196 residues long: Heat shock protein beta-8 (196 aa).

The interval Met-1–Phe-35 is disordered. Phosphoserine is present on residues Ser-24 and Ser-57. At Thr-63 the chain carries Phosphothreonine. An asymmetric dimethylarginine mark is found at Arg-71 and Arg-78. In terms of domain architecture, sHSP spans Thr-74 to Glu-185. Ser-87 is modified (phosphoserine). Residues Pro-176 to Thr-196 form a disordered region. Positions Gly-178 to Thr-196 are enriched in polar residues.

Belongs to the small heat shock protein (HSP20) family. As to quaternary structure, monomer. Forms a ternary complex with BAG3 and HSPA1A. Component of the chaperone-assisted selective autophagy (CASA) complex consisting of BAG3, HSPA8/HSC70, HSPB8 and STUB1/CHIP. Interacts with HSPB1. Interacts with DNAJB6. Interacts with BAG3. Phosphorylated.

The protein localises to the cytoplasm. It localises to the nucleus. Functionally, involved in the chaperone-assisted selective autophagy (CASA), a crucial process for protein quality control, particularly in mechanical strained cells and tissues such as muscle. Displays temperature-dependent chaperone activity. The protein is Heat shock protein beta-8 (HSPB8) of Canis lupus familiaris (Dog).